A 161-amino-acid chain; its full sequence is Peptidyl-prolyl cis-trans isomerase-like 3 (161 aa).

Position 2 is an N-acetylserine (Ser-2). The PPIase cyclophilin-type domain maps to 2–154 (SVTLHTDVGD…NDVHIKDITI (153 aa)). Position 61 is an omega-N-methylarginine (Arg-61).

It belongs to the cyclophilin-type PPIase family. PPIL3 subfamily. Identified in the spliceosome C complex. Ubiquitous. Detected at low levels.

It catalyses the reaction [protein]-peptidylproline (omega=180) = [protein]-peptidylproline (omega=0). Functionally, PPIases accelerate the folding of proteins. It catalyzes the cis-trans isomerization of proline imidic peptide bonds in oligopeptides. May be involved in pre-mRNA splicing. In Homo sapiens (Human), this protein is Peptidyl-prolyl cis-trans isomerase-like 3 (PPIL3).